We begin with the raw amino-acid sequence, 325 residues long: Melanocortin receptor 5 (325 aa).

At 1–37 (MNSSFHLHFLDLNLNATEGNLSGPNVKNKSSPCEDMG) the chain is on the extracellular side. 4 N-linked (GlcNAc...) asparagine glycosylation sites follow: N2, N15, N20, and N28. The helical transmembrane segment at 38 to 61 (IAVEVFLTLGVISLLENILVIGAI) threads the bilayer. Residues 62-73 (VKNKNLHSPMYF) lie on the Cytoplasmic side of the membrane. A helical membrane pass occupies residues 74–97 (FVCSLAVADMLVSMSSAWETITIY). At 98-114 (LLNNKHLVIADAFVRHI) the chain is on the extracellular side. A helical membrane pass occupies residues 115–138 (DNVFDSMICISVVASMCSLLAIAV). The Cytoplasmic portion of the chain corresponds to 139–155 (DRYVTIFYALRYHHIMT). A helical membrane pass occupies residues 156-179 (ARRSGAIIAGIWAFCTGCGIVFIL). The Extracellular portion of the chain corresponds to 180-186 (YSESTYV). Residues 187-211 (ILCLISMFFAMLFLLVSLYIHMFLL) traverse the membrane as a helical segment. Topologically, residues 212–239 (ARTHVKRIAALPGASSARQRTSMQGAVT) are cytoplasmic. The helical transmembrane segment at 240-265 (VTMLLGVFTVCWAPFFLHLTLMLSCP) threads the bilayer. Over 266–273 (QNLYCSRF) the chain is Extracellular. A helical transmembrane segment spans residues 274–297 (MSHFNMYLILIMCNSVMDPLIYAF). Over 298–325 (RSQEMRKTFKEIICCRGFRIACSFPRRD) the chain is Cytoplasmic. S-palmitoyl cysteine attachment occurs at residues C311 and C312.

Belongs to the G-protein coupled receptor 1 family. Expressed in the brain but not in the melanoma cells.

Its subcellular location is the cell membrane. Receptor for MSH (alpha, beta and gamma) and ACTH. The activity of this receptor is mediated by G proteins which activate adenylate cyclase. This receptor is a possible mediator of the immunomodulation properties of melanocortins. This chain is Melanocortin receptor 5 (MC5R), found in Homo sapiens (Human).